A 224-amino-acid polypeptide reads, in one-letter code: LexA repressor (224 aa).

Positions 31 to 51 (RAEIANTLGFKSANAAEEHLQ) form a DNA-binding region, H-T-H motif. Active-site for autocatalytic cleavage activity residues include serine 142 and lysine 179.

This sequence belongs to the peptidase S24 family. Homodimer.

The catalysed reaction is Hydrolysis of Ala-|-Gly bond in repressor LexA.. Represses a number of genes involved in the response to DNA damage (SOS response), including recA and lexA. In the presence of single-stranded DNA, RecA interacts with LexA causing an autocatalytic cleavage which disrupts the DNA-binding part of LexA, leading to derepression of the SOS regulon and eventually DNA repair. The polypeptide is LexA repressor (Delftia acidovorans (strain DSM 14801 / SPH-1)).